We begin with the raw amino-acid sequence, 162 residues long: Phosphopantetheine adenylyltransferase (162 aa).

Residue Thr-9 coordinates substrate. Residues 9–10 (TF) and His-17 each bind ATP. Residues Lys-41, Leu-73, and Arg-87 each contribute to the substrate site. ATP-binding positions include 88–90 (GLR), Glu-98, and 123–129 (LSYISSS).

Belongs to the bacterial CoaD family. As to quaternary structure, homohexamer. The cofactor is Mg(2+).

Its subcellular location is the cytoplasm. The catalysed reaction is (R)-4'-phosphopantetheine + ATP + H(+) = 3'-dephospho-CoA + diphosphate. It functions in the pathway cofactor biosynthesis; coenzyme A biosynthesis; CoA from (R)-pantothenate: step 4/5. Functionally, reversibly transfers an adenylyl group from ATP to 4'-phosphopantetheine, yielding dephospho-CoA (dPCoA) and pyrophosphate. The protein is Phosphopantetheine adenylyltransferase of Teredinibacter turnerae (strain ATCC 39867 / T7901).